The primary structure comprises 318 residues: Homoserine O-succinyltransferase (318 aa).

Cys142 acts as the Acyl-thioester intermediate in catalysis. Substrate is bound by residues Lys163 and Ser192. His235 (proton acceptor) is an active-site residue. Glu237 is an active-site residue. Arg249 serves as a coordination point for substrate.

The protein belongs to the MetA family.

The protein localises to the cytoplasm. The enzyme catalyses L-homoserine + succinyl-CoA = O-succinyl-L-homoserine + CoA. It functions in the pathway amino-acid biosynthesis; L-methionine biosynthesis via de novo pathway; O-succinyl-L-homoserine from L-homoserine: step 1/1. Transfers a succinyl group from succinyl-CoA to L-homoserine, forming succinyl-L-homoserine. In Shewanella putrefaciens (strain CN-32 / ATCC BAA-453), this protein is Homoserine O-succinyltransferase.